Here is a 457-residue protein sequence, read N- to C-terminus: Heme sensor protein HssS (457 aa).

The next 2 helical transmembrane spans lie at 9–29 (IAIY…VLTN) and 164–184 (TFLA…VIAS). An HAMP domain is found at 186-238 (YSIIRPVKKLKLATERLIDGDFETPIKQTRKDEIGTLQYHFNKMRESLGQVDQ). Residues 246–456 (NVSHEIKTPL…TFTITLPNNS (211 aa)) form the Histidine kinase domain. His-249 is modified (phosphohistidine; by autocatalysis).

Autophosphorylated.

The protein resides in the cell membrane. It carries out the reaction ATP + protein L-histidine = ADP + protein N-phospho-L-histidine.. In terms of biological role, member of the two-component regulatory system HssS/HssR involved in intracellular heme homeostasis and tempering of staphylococcal virulence. HssS functions as a heme sensor histidine kinase which is autophosphorylated at a histidine residue and transfers its phosphate group to an aspartate residue of HssR. HssR/HssS activates the expression of hrtAB, an efflux pump, in response to extracellular heme, hemin, hemoglobin or blood. The protein is Heme sensor protein HssS (hssS) of Staphylococcus aureus (strain Mu3 / ATCC 700698).